A 323-amino-acid chain; its full sequence is Mas-related G-protein coupled receptor member X1 (323 aa).

Over 1 to 30 the chain is Extracellular; sequence MDPTISSLSTESTTLNKTGHPSCRPILTLS. A glycan (N-linked (GlcNAc...) asparagine) is linked at asparagine 16. Residues 31–51 traverse the membrane as a helical segment; it reads FLVPIITLLGLAGNTIVLWLL. Residues 52 to 59 are Cytoplasmic-facing; that stretch reads GFRMRRKA. The helical transmembrane segment at 60–80 threads the bilayer; sequence ISVYVLNLSLADSFFLCCHFI. Residues 81–100 are Extracellular-facing; that stretch reads DSLMRIMNFYGIYAHKLSKE. Residues 101 to 121 form a helical membrane-spanning segment; the sequence is ILGNAAIIPYISGLSILSAIS. Over 122 to 143 the chain is Cytoplasmic; that stretch reads TERCLSVLWPIWYHCHRPRNMS. The helical transmembrane segment at 144–164 threads the bilayer; that stretch reads AIICVLIWVLSFLMGILDWFF. Topologically, residues 165–180 are extracellular; it reads SGFLGETHHHLWKNVD. The chain crosses the membrane as a helical span at residues 181-201; that stretch reads FIVTAFLIFLFMLLFGSSLAL. At 202-226 the chain is on the cytoplasmic side; it reads LVRILCGSRRKPLSRLYVTISLTVM. Residues 227 to 247 form a helical membrane-spanning segment; it reads VYLICGLPLGLYLFLLYWFGI. The Extracellular segment spans residues 248–258; that stretch reads HLHYPFCHIYQ. Residues 259-279 form a helical membrane-spanning segment; the sequence is VTVLLSCVNSSANPIIYFLVG. At 280–323 the chain is on the cytoplasmic side; the sequence is SFRHRKKHRSLKMVLKRALEETPEEDEYTDSHVQKPTEISERRC.

The protein belongs to the G-protein coupled receptor 1 family. Mas subfamily. Uniquely localized in a subset of small dorsal root and trigeminal sensory neurons. Associated preferentially with IB4 class of small-diameter somatosensory afferents (also known as nociceptors).

It localises to the cell membrane. Functionally, orphan receptor activated by neuropeptides terminating in Arg-Phe or Arg-Phe-amide. Mediates its action by association with G proteins that activate a phosphatidylinositol-calcium second messenger system. Its effect is mediated by G(q) and G(11) proteins. May regulate the function of nociceptive neurons by modulation of pain perception. This is Mas-related G-protein coupled receptor member X1 (Mrgprx1) from Rattus norvegicus (Rat).